The sequence spans 1033 residues: Calcium-transporting ATPase 12, plasma membrane-type (1033 aa).

An N-acetylmethionine modification is found at Met1. The Cytoplasmic segment spans residues Met1–Gly152. The interval Gln25–Tyr36 is interaction with calmodulin. Position 37 is a phosphoserine (Ser37). A helical transmembrane segment spans residues Leu153 to Ala173. Residues Ile174 to Tyr191 lie on the Lumenal side of the membrane. Residues Glu192–Phe212 form a helical membrane-spanning segment. Residues Arg213–Leu341 lie on the Cytoplasmic side of the membrane. Residues Asp342–Val361 form a helical membrane-spanning segment. Residues Val362–Ile397 are Lumenal-facing. Residues Val398–Leu415 form a helical membrane-spanning segment. Residues Ala416 to Ile806 lie on the Cytoplasmic side of the membrane. Asp453 functions as the 4-aspartylphosphate intermediate in the catalytic mechanism. Asp751 and Asp755 together coordinate Mg(2+). The helical transmembrane segment at Gln807–Phe825 threads the bilayer. Topologically, residues Ile826–Leu836 are lumenal. A helical transmembrane segment spans residues Thr837 to Ala857. The Cytoplasmic segment spans residues Thr858–Leu877. The chain crosses the membrane as a helical span at residues Ile878 to Leu900. At Gln901–Ser909 the chain is on the lumenal side. A helical transmembrane segment spans residues Val910–Asn930. Topologically, residues Glu931–Arg948 are cytoplasmic. A helical transmembrane segment spans residues Asn949–Leu970. Residues Lys971 to Asn980 are Lumenal-facing. A helical transmembrane segment spans residues Gly981–Lys1002. Topologically, residues Phe1003 to Val1006 are cytoplasmic.

This sequence belongs to the cation transport ATPase (P-type) (TC 3.A.3) family. Type IIB subfamily.

It localises to the membrane. It catalyses the reaction Ca(2+)(in) + ATP + H2O = Ca(2+)(out) + ADP + phosphate + H(+). Activated by calmodulin. This magnesium-dependent enzyme catalyzes the hydrolysis of ATP coupled with the translocation of calcium from the cytosol out of the cell or into organelles. This is Calcium-transporting ATPase 12, plasma membrane-type (ACA12) from Arabidopsis thaliana (Mouse-ear cress).